The primary structure comprises 352 residues: DNA integrity scanning protein DisA (352 aa).

Positions Pro3–Asp143 constitute a DAC domain. Residues Gly71, Leu89, and Thr102–Thr106 contribute to the ATP site.

Belongs to the DisA family. As to quaternary structure, homooctamer. Mg(2+) serves as cofactor.

The enzyme catalyses 2 ATP = 3',3'-c-di-AMP + 2 diphosphate. In terms of biological role, participates in a DNA-damage check-point. DisA forms globular foci that rapidly scan along the chromosomes searching for lesions. Functionally, also has diadenylate cyclase activity, catalyzing the condensation of 2 ATP molecules into cyclic di-AMP (c-di-AMP). c-di-AMP likely acts as a signaling molecule that may couple DNA integrity with a cellular process. In Thermotoga neapolitana (strain ATCC 49049 / DSM 4359 / NBRC 107923 / NS-E), this protein is DNA integrity scanning protein DisA.